The primary structure comprises 444 residues: Coagulation factor VII (444 aa).

Positions methionine 1 to alanine 21 are cleaved as a signal peptide. A propeptide spanning residues alanine 22–arginine 39 is cleaved from the precursor. Residues alanine 40–asparagine 84 form the Gla domain. 4-carboxyglutamate is present on residues glutamate 45, glutamate 46, glutamate 53, glutamate 55, glutamate 58, glutamate 59, glutamate 64, glutamate 65, glutamate 68, and glutamate 74. Cysteine 56 and cysteine 61 are oxidised to a cystine. The EGF-like 1; calcium-binding domain occupies aspartate 85–glutamate 121. 9 disulfides stabilise this stretch: cysteine 89-cysteine 100, cysteine 94-cysteine 109, cysteine 111-cysteine 120, cysteine 130-cysteine 141, cysteine 137-cysteine 151, cysteine 153-cysteine 166, cysteine 174-cysteine 301, cysteine 198-cysteine 203, and cysteine 217-cysteine 233. O-linked (Glc...) serine; alternate glycosylation occurs at serine 91. Serine 91 is a glycosylation site (O-linked (Xyl...) serine; alternate). Serine 99 carries O-linked (Fuc) serine glycosylation. Residue aspartate 102 is modified to (3R)-3-hydroxyaspartate. The region spanning aspartate 126–threonine 167 is the EGF-like 2 domain. The Peptidase S1 domain occupies isoleucine 192–arginine 431. A glycan (N-linked (GlcNAc...) asparagine) is linked at asparagine 211. Histidine 232 serves as the catalytic Charge relay system. Asparagine 242 carries N-linked (GlcNAc...) asparagine glycosylation. Aspartate 281 serves as the catalytic Charge relay system. Asparagine 306 carries N-linked (GlcNAc...) asparagine glycosylation. A disulfide bond links cysteine 349 and cysteine 368. Aspartate 377 provides a ligand contact to substrate. Cysteine 379 and cysteine 407 are joined by a disulfide. The active-site Charge relay system is the serine 383.

It belongs to the peptidase S1 family. Heterodimer of a light chain and a heavy chain linked by a disulfide bond. Post-translationally, the vitamin K-dependent, enzymatic carboxylation of some glutamate residues allows the modified protein to bind calcium. In terms of processing, the iron and 2-oxoglutarate dependent 3-hydroxylation of aspartate and asparagine is (R) stereospecific within EGF domains. O-glycosylated. O-fucosylated by POFUT1 on a conserved serine or threonine residue found in the consensus sequence C2-X(4,5)-[S/T]-C3 of EGF domains, where C2 and C3 are the second and third conserved cysteines. Post-translationally, can be either O-glucosylated or O-xylosylated at Ser-91 by POGLUT1. Plasma.

It localises to the secreted. The enzyme catalyses Selective cleavage of Arg-|-Ile bond in factor X to form factor Xa.. Its function is as follows. Initiates the extrinsic pathway of blood coagulation. Serine protease that circulates in the blood in a zymogen form. Factor VII is converted to factor VIIa by factor Xa, factor XIIa, factor IXa, or thrombin by minor proteolysis. In the presence of tissue factor and calcium ions, factor VIIa then converts factor X to factor Xa by limited proteolysis. Factor VIIa also converts factor IX to factor IXa in the presence of tissue factor and calcium. The chain is Coagulation factor VII (F7) from Oryctolagus cuniculus (Rabbit).